The primary structure comprises 501 residues: Phosphatase and actin regulator 1 (501 aa).

The stretch at 1–18 is one RPEL 1 repeat; it reads MRQSREELIKRGVLKEIF. Disordered regions lie at residues 21–46 and 295–329; these read DGELSIPNEEGALENGQPLGSGQVLS and DNKENVPHEADYEDSSCLYPRQEEEEEEDEDEDNS. A compositionally biased stretch (low complexity) spans 36–46; the sequence is GQPLGSGQVLS. A compositionally biased stretch (basic and acidic residues) spans 295 to 304; sequence DNKENVPHEA. Positions 317 to 328 are enriched in acidic residues; it reads EEEEEEDEDEDN. RPEL repeat units lie at residues 343–368, 381–406, and 419–444; these read DSLAIKLSNRPSKRELEEKNILPMQT, TKLTRRLSQRPTAEELEQRNILKPRN, and RRLTRKLSQRPTVEELRERKILIRFS. Residues 382-415 form a disordered region; that stretch reads KLTRRLSQRPTAEELEQRNILKPRNEQEEQEEKR. Positions 392 to 415 are enriched in basic and acidic residues; sequence TAEELEQRNILKPRNEQEEQEEKR.

This sequence belongs to the phosphatase and actin regulator family. Interacts (via RPEL repeats) with ACTA1. In terms of tissue distribution, expressed in the gizzard, and in neurons from central and peripheral nervous systems.

The protein localises to the cytoplasm. The protein resides in the synapse. It localises to the nucleus. Binds actin monomers (G actin) and plays a role in the reorganization of the actin cytoskeleton and in formation of actin stress fibers. The polypeptide is Phosphatase and actin regulator 1 (PHACTR1) (Gallus gallus (Chicken)).